The following is a 161-amino-acid chain: Putative TRAP transporter small permease protein HI_1030 (161 aa).

Helical transmembrane passes span 13–33 (LEIL…LNVV), 51–71 (YLFI…NQHV), 86–106 (AILK…IIEG), and 135–155 (IAGI…IFFI).

The protein belongs to the TRAP transporter small permease family.

The protein resides in the cell inner membrane. The chain is Putative TRAP transporter small permease protein HI_1030 from Haemophilus influenzae (strain ATCC 51907 / DSM 11121 / KW20 / Rd).